The primary structure comprises 178 residues: Peptide methionine sulfoxide reductase MsrA (178 aa).

Cys12 is an active-site residue.

Belongs to the MsrA Met sulfoxide reductase family.

It catalyses the reaction L-methionyl-[protein] + [thioredoxin]-disulfide + H2O = L-methionyl-(S)-S-oxide-[protein] + [thioredoxin]-dithiol. The catalysed reaction is [thioredoxin]-disulfide + L-methionine + H2O = L-methionine (S)-S-oxide + [thioredoxin]-dithiol. In terms of biological role, has an important function as a repair enzyme for proteins that have been inactivated by oxidation. Catalyzes the reversible oxidation-reduction of methionine sulfoxide in proteins to methionine. In Erwinia tasmaniensis (strain DSM 17950 / CFBP 7177 / CIP 109463 / NCPPB 4357 / Et1/99), this protein is Peptide methionine sulfoxide reductase MsrA.